The following is a 609-amino-acid chain: Chaperone protein DnaK (609 aa).

A Phosphothreonine; by autocatalysis modification is found at T173. The segment at 580-609 (QAAQGGGAEGQEPKKDNVVDADYEVVDDKK) is disordered. Over residues 598–609 (VDADYEVVDDKK) the composition is skewed to acidic residues.

This sequence belongs to the heat shock protein 70 family.

In terms of biological role, acts as a chaperone. This is Chaperone protein DnaK from Brevibacillus brevis (strain 47 / JCM 6285 / NBRC 100599).